The primary structure comprises 390 residues: Mannitol-1-phosphate 5-dehydrogenase (390 aa).

3–14 (ALHFGAGNIGRG) provides a ligand contact to NAD(+).

It belongs to the mannitol dehydrogenase family.

It catalyses the reaction D-mannitol 1-phosphate + NAD(+) = beta-D-fructose 6-phosphate + NADH + H(+). This is Mannitol-1-phosphate 5-dehydrogenase from Buchnera aphidicola subsp. Baizongia pistaciae (strain Bp).